Consider the following 451-residue polypeptide: ACT domain-containing protein ACR4 (451 aa).

4 consecutive ACT domains span residues 35–118 (VIRV…VIPS), 123–200 (VIEL…NTPR), 259–335 (VVTV…VSEG), and 337–416 (KLEL…QEQQ). Positions 409–428 (KNNPQEQQQRQKSPSHESPT) are disordered. A compositionally biased stretch (polar residues) spans 410–420 (NNPQEQQQRQK).

In terms of tissue distribution, highly expressed in flowers and at lower levels in leaves and siliques.

In terms of biological role, may bind amino acids. The polypeptide is ACT domain-containing protein ACR4 (Arabidopsis thaliana (Mouse-ear cress)).